A 503-amino-acid chain; its full sequence is Maturase K (503 aa).

The protein belongs to the intron maturase 2 family. MatK subfamily.

Its subcellular location is the plastid. It is found in the chloroplast. Functionally, usually encoded in the trnK tRNA gene intron. Probably assists in splicing its own and other chloroplast group II introns. This is Maturase K from Liquidambar styraciflua (Sweetgum tree).